Consider the following 255-residue polypeptide: uncharacterized protein (255 aa).

In terms of domain architecture, HTH deoR-type spans 3–58 (PVERRQIILEMVAEKGIVSIAELTDRMNVSHMTIRRDLQKLEQQGAVVLVSGGVQS). Residues 20-39 (VSIAELTDRMNVSHMTIRRD) constitute a DNA-binding region (H-T-H motif).

This is an uncharacterized protein from Escherichia coli (strain K12).